The primary structure comprises 108 residues: Nucleoid-associated protein IL1848 (108 aa).

Disordered regions lie at residues 1–26 (MFKG…AQEE) and 88–108 (KERM…KMPF). Low complexity predominate over residues 9 to 26 (MMKQAQQMQERMQQAQEE).

The protein belongs to the YbaB/EbfC family. In terms of assembly, homodimer.

It is found in the cytoplasm. Its subcellular location is the nucleoid. Functionally, binds to DNA and alters its conformation. May be involved in regulation of gene expression, nucleoid organization and DNA protection. This chain is Nucleoid-associated protein IL1848, found in Idiomarina loihiensis (strain ATCC BAA-735 / DSM 15497 / L2-TR).